A 203-amino-acid chain; its full sequence is uncharacterized protein (203 aa).

This is an uncharacterized protein from Methanocaldococcus jannaschii (strain ATCC 43067 / DSM 2661 / JAL-1 / JCM 10045 / NBRC 100440) (Methanococcus jannaschii).